A 252-amino-acid polypeptide reads, in one-letter code: MISFEFPVTERTRILLRLEYLYGRLAYFIGKDHPHDHHAALQVLFELMETASRADLKADLLQELERQKQMLEALRDNPNVAEETLEGVLEEIERASSQLLALTGKFGQNLRENEWLMAIKQRAGIPGGTCQFDLPSYHLWQQRSAEVRRQDLRRWAAPLMPTADAAEILLHLLRDSGKTYHYVARKGAFQQMSGGKVVQLIQVAYDDNLELLPELSANKYALNIRFVSAVTGEARPRQTEQDVEFQLTNCKF.

The protein belongs to the ZapD family. In terms of assembly, interacts with FtsZ.

The protein resides in the cytoplasm. In terms of biological role, cell division factor that enhances FtsZ-ring assembly. Directly interacts with FtsZ and promotes bundling of FtsZ protofilaments, with a reduction in FtsZ GTPase activity. The chain is Cell division protein ZapD from Chromobacterium violaceum (strain ATCC 12472 / DSM 30191 / JCM 1249 / CCUG 213 / NBRC 12614 / NCIMB 9131 / NCTC 9757 / MK).